Here is a 900-residue protein sequence, read N- to C-terminus: Peroxisomal hydratase-dehydrogenase-epimerase (900 aa).

2 short-chain dehydrogenase like regions span residues 6-230 (SFKD…THES) and 319-535 (SLCN…ASEE). NADP(+)-binding residues include Ile-14, Lys-53, Asn-100, Arg-133, Tyr-165, and Lys-169. Tyr-165 acts as the Proton donor in catalysis. Lys-169 (lowers pKa of active site Tyr) is an active-site residue. (3R)-3-hydroxydecanoyl-CoA is bound by residues His-689, Gly-690, Lys-719, Asp-803, Asn-805, Gly-826, Phe-851, and Thr-852. One can recognise a MaoC-like domain in the interval 775–887 (EVPHGKVPDF…DTTRNVIVLD (113 aa)). Residues 898–900 (SKL) carry the Microbody targeting signal motif.

It belongs to the short-chain dehydrogenases/reductases (SDR) family. In terms of assembly, monomer.

The protein resides in the peroxisome. It catalyses the reaction a (3R)-3-hydroxyacyl-CoA = a (2E)-enoyl-CoA + H2O. It carries out the reaction a (3R)-3-hydroxyacyl-CoA + NAD(+) = a 3-oxoacyl-CoA + NADH + H(+). The protein operates within lipid metabolism; fatty acid beta-oxidation. Second trifunctional enzyme acting on the beta-oxidation pathway for fatty acids, possessing hydratase-dehydrogenase-epimerase activities. Converts trans-2-enoyl-CoA via D-3-hydroxyacyl-CoA to 3-ketoacyl-CoA. This is Peroxisomal hydratase-dehydrogenase-epimerase (FOX2) from Saccharomyces cerevisiae (strain ATCC 204508 / S288c) (Baker's yeast).